The primary structure comprises 282 residues: Diaminopimelate epimerase (282 aa).

Substrate is bound by residues asparagine 13, glutamine 45, and asparagine 64. The active-site Proton donor is the cysteine 73. Substrate-binding positions include glycine 74 to asparagine 75, asparagine 155, asparagine 189, and glutamate 207 to arginine 208. Catalysis depends on cysteine 216, which acts as the Proton acceptor. Glycine 217–serine 218 is a binding site for substrate.

The protein belongs to the diaminopimelate epimerase family. In terms of assembly, homodimer.

Its subcellular location is the cytoplasm. The enzyme catalyses (2S,6S)-2,6-diaminopimelate = meso-2,6-diaminopimelate. It participates in amino-acid biosynthesis; L-lysine biosynthesis via DAP pathway; DL-2,6-diaminopimelate from LL-2,6-diaminopimelate: step 1/1. Its function is as follows. Catalyzes the stereoinversion of LL-2,6-diaminopimelate (L,L-DAP) to meso-diaminopimelate (meso-DAP), a precursor of L-lysine and an essential component of the bacterial peptidoglycan. This is Diaminopimelate epimerase from Bartonella bacilliformis (strain ATCC 35685 / KC583 / Herrer 020/F12,63).